We begin with the raw amino-acid sequence, 662 residues long: MSTTTTEARSPLPLLLRRGRSSTALSASTAEARSPLSILQFRRRSSKDVRNITSVSSSLLPAFGTFIEDDNPSSKPFIVLHFDRRYRLWELFLVILVGYSAWASLFELAFEKAAEGALLTIDLVVDFFFAVDIILTFFVSYLDNTTYLNVTDHKLIAKRYLKSVAFVMDVASTLPIQFIYKTITGDVGRGQAFGFLNLLRLWRLRRVAELFKRLEKDAHFNYFVIRVIKLLCVTIFWIHLAGCILYWIAYHYPRPTDTWIGSQVEDFKERSVWLGYTYSMYWSIVTLTTVGYGDLHAVNSREKTFNMFYMLFNIGLTSYIIGIMTNLVVHGALRTFAMRSAINDILRYTSKNRLPDTMREQMLAHMQLKFKTAELRQEEVLQDLPKAIRSSINQHLFRSIIEEAYLFKGFPEGLLVQLVSQIQAEYFPPKMEIILQNEIPTDFYVIVSGGVDIIASKGVSEQVLAKLGPGSMAGEIGVVFNIPQPFTVRTRRLSQVIRIGHHKFKEMVQSDNDVDAKMIIANFMTYLKGLNDELKKEIPFLRDLLDDADAQVQETVQSEETPQSNDEEIVTVSRHENGQIEERRREGVPKRVIIHGQAPPNQDNKNNGDSNGRLIILPDSIQLLFDLAEKKLGKRGSTIAMADGAHVEQIDALRENDHLYIF.

Over 1–90 (MSTTTTEARS…HFDRRYRLWE (90 aa)) the chain is Cytoplasmic. A helical membrane pass occupies residues 91–111 (LFLVILVGYSAWASLFELAFE). Residues 112–118 (KAAEGAL) lie on the Extracellular side of the membrane. Residues 119 to 139 (LTIDLVVDFFFAVDIILTFFV) traverse the membrane as a helical segment. The Cytoplasmic portion of the chain corresponds to 140-163 (SYLDNTTYLNVTDHKLIAKRYLKS). The chain crosses the membrane as a helical span at residues 164 to 184 (VAFVMDVASTLPIQFIYKTIT). The Extracellular segment spans residues 185 to 194 (GDVGRGQAFG). Residues 195–215 (FLNLLRLWRLRRVAELFKRLE) traverse the membrane as a helical; Voltage-sensor segment. The Cytoplasmic segment spans residues 216 to 229 (KDAHFNYFVIRVIK). Residues 230–250 (LLCVTIFWIHLAGCILYWIAY) traverse the membrane as a helical segment. The Extracellular portion of the chain corresponds to 251-277 (HYPRPTDTWIGSQVEDFKERSVWLGYT). The segment at residues 278–297 (YSMYWSIVTLTTVGYGDLHA) is an intramembrane region (pore-forming). Residues 298-301 (VNSR) are Extracellular-facing. The helical transmembrane segment at 302 to 322 (EKTFNMFYMLFNIGLTSYIIG) threads the bilayer. Residues 323–662 (IMTNLVVHGA…LRENDHLYIF (340 aa)) lie on the Cytoplasmic side of the membrane. 406-527 (LFKGFPEGLL…MIIANFMTYL (122 aa)) lines the a nucleoside 3',5'-cyclic phosphate pocket. A coiled-coil region spans residues 528-558 (KGLNDELKKEIPFLRDLLDDADAQVQETVQS). In terms of domain architecture, KHA spans 591–662 (RVIIHGQAPP…LRENDHLYIF (72 aa)).

It belongs to the potassium channel family. Plant (TC 1.A.1.4) subfamily. In terms of assembly, the potassium channel is probably composed of a homo- or heterotetrameric complex of pore-forming subunits. May interact with AKT1 and AKT2. Interacts with SLAC1. Expressed predominantly in root hairs and root endodermis and, at a lower level, in leaf nodes, trichomes, and hydathodes.

It is found in the membrane. Functionally, probable modulatory (alpha) subunit of inward-rectifying potassium channels. Could mediate potassium uptake from the soil solution by plant roots in association with AKT1. In Arabidopsis thaliana (Mouse-ear cress), this protein is Potassium channel KAT3 (KAT3).